A 330-amino-acid chain; its full sequence is Peroxisomal membrane protein PEX13 (330 aa).

Residues 1 to 14 are compositionally biased toward pro residues; sequence MSAPPTNQPPPLPP. The disordered stretch occupies residues 1-20; that stretch reads MSAPPTNQPPPLPPRSFDNQ. A helical membrane pass occupies residues 193–213; that stretch reads ASVNWPAALFWVVAIGGPWLI. The 66-residue stretch at 235–300 folds into the SH3 domain; sequence APHYTAQALF…PINYVRIVGK (66 aa).

This sequence belongs to the peroxin-13 family. As to quaternary structure, interacts with PEX14/prx-14; forming the PEX13-PEX14 docking complex.

The protein resides in the peroxisome membrane. Component of the PEX13-PEX14 docking complex, a translocon channel that specifically mediates the import of peroxisomal cargo proteins bound to PEX5/prx-5 receptor. The PEX13-PEX14 docking complex forms a large import pore which can be opened to a diameter of about 9 nm. Mechanistically, PEX5/prx-5 receptor along with cargo proteins associates with the PEX14/prx-14 subunit of the PEX13-PEX14 docking complex in the cytosol, leading to the insertion of the receptor into the organelle membrane with the concomitant translocation of the cargo into the peroxisome matrix. The protein is Peroxisomal membrane protein PEX13 (prx-13) of Caenorhabditis elegans.